Reading from the N-terminus, the 384-residue chain is N-acetylneuraminate epimerase (384 aa).

The signal sequence occupies residues 1-29; sequence MGMQMKNFKKMMTLMALCLSVAITTSGYA. Kelch repeat units lie at residues 51–95, 97–149, 151–184, 185–230, 233–282, 304–353, and 355–384; these read VIYV…VFLN, KLYV…VKLN, TMVL…KVIY, NYFN…VMEN, LMLI…LAGA, QNYT…SYGD, and VFLI…LLIK. Glu-239 functions as the Proton acceptor in the catalytic mechanism.

Belongs to the NanM family. In terms of assembly, homodimer.

The protein resides in the periplasm. It carries out the reaction N-acetyl-alpha-neuraminate = N-acetyl-beta-neuraminate. Its function is as follows. Converts alpha-N-acetylneuranimic acid (Neu5Ac) to the beta-anomer, accelerating the equilibrium between the alpha- and beta-anomers. Probably facilitates sialidase-negative bacteria to compete successfully for limited amounts of extracellular Neu5Ac, which is likely taken up in the beta-anomer. In addition, the rapid removal of sialic acid from solution might be advantageous to the bacterium to damp down host responses. This is N-acetylneuraminate epimerase from Salmonella typhi.